Here is a 388-residue protein sequence, read N- to C-terminus: Mannitol-1-phosphate 5-dehydrogenase (388 aa).

5–16 (AVHFGGGNIGRG) serves as a coordination point for NAD(+). Lysine 213 is an active-site residue.

The protein belongs to the mannitol dehydrogenase family. As to quaternary structure, monomer.

It catalyses the reaction D-mannitol 1-phosphate + NAD(+) = beta-D-fructose 6-phosphate + NADH + H(+). Functionally, catalyzes the NAD(H)-dependent interconversion of D-fructose 6-phosphate and D-mannitol 1-phosphate in the mannitol metabolic pathway. The protein is Mannitol-1-phosphate 5-dehydrogenase of Penicillium rubens (strain ATCC 28089 / DSM 1075 / NRRL 1951 / Wisconsin 54-1255) (Penicillium chrysogenum).